We begin with the raw amino-acid sequence, 551 residues long: Glucans biosynthesis protein D (551 aa).

The tat-type signal signal peptide spans 1-32 (MNRRRFIKASLALAAACGTPGLATLFSRNAWA).

It belongs to the OpgD/OpgG family. Predicted to be exported by the Tat system. The position of the signal peptide cleavage has not been experimentally proven.

It is found in the periplasm. The protein operates within glycan metabolism; osmoregulated periplasmic glucan (OPG) biosynthesis. Probably involved in the control of the structural glucose backbone of osmoregulated periplasmic glucans (OPGs). This chain is Glucans biosynthesis protein D, found in Cronobacter sakazakii (strain ATCC BAA-894) (Enterobacter sakazakii).